The sequence spans 760 residues: MSHATHLLGFPRIGAKRELKTLLERYWKQELDEAALSQGAKELRQKHWLLQKGAGVELSPVGDFSLYDHVLDAQLLVGAAPARFGFDAAALTTGQYFELARGNAVQPAMEMTKWFDTNYHYLVPEWHADTAFSAQPERLLSQLREARALGVAAKPVLLGPLSLLWLGKAKGRPFDRLALLPGLVAAYRELLSSLRAAGAEWAQIDEPILALDLEPSWLDAFAPAYAQLSRHAPKLLLATYFGDVSEHAARLKSLPVAGLHLDLVRAPEQISAFLPDYPADKVLSAGIVDGRNIWRADLSALLDRLAPLAQQLGDRLWLAPSCSLLHSPFDAAAETGLDPELKNWLAFAVQKLNELKTLKRGLEHGRSAIAGELSGSDFAREQRRASPRIHDPAVARRLAALPEGTDRRASPYPIRAERQQAWLKLPPLPTTTIGSFPQTPAIRASRAAFKKGELSAAGYRQAMEKEIELAIRRQEALGLDVLVHGEAERNDMVEYFGEQLAGFAFTAGGWVQSYGSRCVKPPIIFGDVARPKPMTVDWARYAQSLTAKPVKGMLTGPVTILQWSFVRDDLPRREVCRQIALALNDEVLDLEAAGIRVIQIDEPAIREGLPLKRAGRDVYLAWAGEAFRLSSRGVDDATQIHTHMCYSEFGDILPAIAALDADVITIETSRSDMALLADFGRFRYPNAIGPGVYDIHSPRVPSAAEIRALLDKALRVIPAERLWVNPDCGLKTRGWPEVEAALAAMVAVGRELREKLAQAA.

5-methyltetrahydropteroyltri-L-glutamate is bound by residues arginine 17–lysine 20 and lysine 113. Residues isoleucine 433 to serine 435 and glutamate 486 each bind L-homocysteine. Residues isoleucine 433 to serine 435 and glutamate 486 contribute to the L-methionine site. 5-methyltetrahydropteroyltri-L-glutamate is bound by residues arginine 517–cysteine 518 and tryptophan 563. Position 601 (aspartate 601) interacts with L-homocysteine. Aspartate 601 provides a ligand contact to L-methionine. Glutamate 607 is a 5-methyltetrahydropteroyltri-L-glutamate binding site. Zn(2+) is bound by residues histidine 643, cysteine 645, and glutamate 667. The active-site Proton donor is histidine 696. Cysteine 728 contacts Zn(2+).

Belongs to the vitamin-B12 independent methionine synthase family. Requires Zn(2+) as cofactor.

It catalyses the reaction 5-methyltetrahydropteroyltri-L-glutamate + L-homocysteine = tetrahydropteroyltri-L-glutamate + L-methionine. It functions in the pathway amino-acid biosynthesis; L-methionine biosynthesis via de novo pathway; L-methionine from L-homocysteine (MetE route): step 1/1. In terms of biological role, catalyzes the transfer of a methyl group from 5-methyltetrahydrofolate to homocysteine resulting in methionine formation. The chain is 5-methyltetrahydropteroyltriglutamate--homocysteine methyltransferase from Chromobacterium violaceum (strain ATCC 12472 / DSM 30191 / JCM 1249 / CCUG 213 / NBRC 12614 / NCIMB 9131 / NCTC 9757 / MK).